The chain runs to 333 residues: Fructose-1,6-bisphosphatase class 1 1 (333 aa).

Mg(2+) is bound by residues E81, D100, L102, and D103. Substrate contacts are provided by residues 103–106 (DGSS) and N191. A Mg(2+)-binding site is contributed by E263.

Belongs to the FBPase class 1 family. As to quaternary structure, homotetramer. The cofactor is Mg(2+).

Its subcellular location is the cytoplasm. It catalyses the reaction beta-D-fructose 1,6-bisphosphate + H2O = beta-D-fructose 6-phosphate + phosphate. Its pathway is carbohydrate biosynthesis; gluconeogenesis. With respect to regulation, fructose-1,6-bisphosphatase II is not light-activated. This chain is Fructose-1,6-bisphosphatase class 1 1, found in Cereibacter sphaeroides (Rhodobacter sphaeroides).